We begin with the raw amino-acid sequence, 173 residues long: Adenine phosphoribosyltransferase (173 aa).

The protein belongs to the purine/pyrimidine phosphoribosyltransferase family. In terms of assembly, homodimer.

Its subcellular location is the cytoplasm. It carries out the reaction AMP + diphosphate = 5-phospho-alpha-D-ribose 1-diphosphate + adenine. It functions in the pathway purine metabolism; AMP biosynthesis via salvage pathway; AMP from adenine: step 1/1. Its function is as follows. Catalyzes a salvage reaction resulting in the formation of AMP, that is energically less costly than de novo synthesis. The chain is Adenine phosphoribosyltransferase from Ureaplasma parvum serovar 3 (strain ATCC 27815 / 27 / NCTC 11736).